Here is a 1149-residue protein sequence, read N- to C-terminus: ATP-dependent helicase/deoxyribonuclease subunit B (1149 aa).

8-15 is an ATP binding site; sequence GRAGTGKT. Positions 784, 1102, 1105, and 1111 each coordinate [4Fe-4S] cluster.

Belongs to the helicase family. AddB/RexB type 1 subfamily. As to quaternary structure, heterodimer of AddA and AddB. The cofactor is Mg(2+). Requires [4Fe-4S] cluster as cofactor.

Functionally, the heterodimer acts as both an ATP-dependent DNA helicase and an ATP-dependent, dual-direction single-stranded exonuclease. Recognizes the chi site generating a DNA molecule suitable for the initiation of homologous recombination. The AddB subunit has 5' -&gt; 3' nuclease activity but not helicase activity. This chain is ATP-dependent helicase/deoxyribonuclease subunit B, found in Thermoanaerobacter pseudethanolicus (strain ATCC 33223 / 39E) (Clostridium thermohydrosulfuricum).